The primary structure comprises 180 residues: Large ribosomal subunit protein uL6 (180 aa).

It belongs to the universal ribosomal protein uL6 family. In terms of assembly, part of the 50S ribosomal subunit.

Functionally, this protein binds to the 23S rRNA, and is important in its secondary structure. It is located near the subunit interface in the base of the L7/L12 stalk, and near the tRNA binding site of the peptidyltransferase center. This is Large ribosomal subunit protein uL6 from Clostridium botulinum (strain Eklund 17B / Type B).